Consider the following 570-residue polypeptide: Grayanic acid biosynthesis cluster cytochrome P450 monooxygenase (570 aa).

The chain crosses the membrane as a helical span at residues 9–29 (ILTIFWLPIAAAXLYGAGLAI). Asn191 carries an N-linked (GlcNAc...) asparagine glycan. Cys510 serves as a coordination point for heme.

Belongs to the cytochrome P450 family. Requires heme as cofactor.

The protein resides in the membrane. Its pathway is secondary metabolite biosynthesis. Non-reducing polyketide synthase; part of the gene cluster that mediates the biosynthesis of orcinol depsidone grayanic acid (GRA), the only major secondary metabolite known in C.grayi. The first step consists in the ring and depside synthesis by PKS16 leading to 4-O-demethylsphaerophorin, involving different orcinol-like rings, one with acetyl CoA and the other with octanoyl CoA as the starter. Further depsidone formation by the GRA cluster-specific cytochrome P450 leads to 4-O-demethylgrayanic acid. Finally, the cluster specific O-methyltransferase probably converts the 4-O-demethylgrayanic acid into grayanic acid. In Cladonia grayi (Gray's cup lichen), this protein is Grayanic acid biosynthesis cluster cytochrome P450 monooxygenase.